The chain runs to 160 residues: Transcriptional repressor NrdR (160 aa).

Over residues methionine 1–threonine 11 the composition is skewed to polar residues. The disordered stretch occupies residues methionine 1–glutamate 20. Residues cysteine 3 to cysteine 34 fold into a zinc finger. Residues leucine 49–aspartate 139 form the ATP-cone domain.

It belongs to the NrdR family. The cofactor is Zn(2+).

Negatively regulates transcription of bacterial ribonucleotide reductase nrd genes and operons by binding to NrdR-boxes. In Rhodopseudomonas palustris (strain ATCC BAA-98 / CGA009), this protein is Transcriptional repressor NrdR.